The chain runs to 265 residues: Undecaprenyl-diphosphatase 1 (265 aa).

Helical transmembrane passes span 4-24 (IITA…PISS), 42-62 (AKTF…ILYH), 84-104 (FHVF…HDII), 108-128 (LFQP…MIFA), 184-204 (SEFS…LDLL), 217-237 (MFAV…VTFL), and 245-265 (LKPF…FVLL).

The protein belongs to the UppP family.

It localises to the cell membrane. The enzyme catalyses di-trans,octa-cis-undecaprenyl diphosphate + H2O = di-trans,octa-cis-undecaprenyl phosphate + phosphate + H(+). Functionally, catalyzes the dephosphorylation of undecaprenyl diphosphate (UPP). Confers resistance to bacitracin. This is Undecaprenyl-diphosphatase 1 from Bacillus thuringiensis subsp. konkukian (strain 97-27).